The following is a 334-amino-acid chain: MNERMVDQSMHSEETDFELSLRPTRLRQYIGQNSIKSNLEVFIKAAKLRHEPLDHVLLFGPPGLGKTTLSNIIANEMEVNIRTVSGPSLERPGDLAAILSGLQPGDVLFIDEIHRLSSVVEEVLYPAMEDFFLDIIIGKGDEARSIRIDLPPFTLVGATTRAGSLTGPLRDRFGVHLRLEYYNESDLKEIIIRTAEVLGTGIDEESAIELAKRSRGTPRVANRLLKRVRDFQQVNEDEQIYIETTKHALGLLQVDQHGLDYIDHKMMNCIIKQYNGGPVGLDTIAVTIGEERITIEDVYEPFLIQKGFLERTPRGRKATPLAYEHFAKSNEERG.

The segment at methionine 1–tyrosine 182 is large ATPase domain (RuvB-L). ATP is bound by residues leucine 21, arginine 22, glycine 63, lysine 66, threonine 67, threonine 68, glutamate 129–phenylalanine 131, arginine 172, tyrosine 182, and arginine 219. Threonine 67 contacts Mg(2+). The interval asparagine 183–glutamine 253 is small ATPAse domain (RuvB-S). The interval glutamine 256–glycine 334 is head domain (RuvB-H). DNA-binding residues include arginine 292, arginine 311, and arginine 316.

The protein belongs to the RuvB family. Homohexamer. Forms an RuvA(8)-RuvB(12)-Holliday junction (HJ) complex. HJ DNA is sandwiched between 2 RuvA tetramers; dsDNA enters through RuvA and exits via RuvB. An RuvB hexamer assembles on each DNA strand where it exits the tetramer. Each RuvB hexamer is contacted by two RuvA subunits (via domain III) on 2 adjacent RuvB subunits; this complex drives branch migration. In the full resolvosome a probable DNA-RuvA(4)-RuvB(12)-RuvC(2) complex forms which resolves the HJ.

The protein localises to the cytoplasm. The catalysed reaction is ATP + H2O = ADP + phosphate + H(+). Its function is as follows. The RuvA-RuvB-RuvC complex processes Holliday junction (HJ) DNA during genetic recombination and DNA repair, while the RuvA-RuvB complex plays an important role in the rescue of blocked DNA replication forks via replication fork reversal (RFR). RuvA specifically binds to HJ cruciform DNA, conferring on it an open structure. The RuvB hexamer acts as an ATP-dependent pump, pulling dsDNA into and through the RuvAB complex. RuvB forms 2 homohexamers on either side of HJ DNA bound by 1 or 2 RuvA tetramers; 4 subunits per hexamer contact DNA at a time. Coordinated motions by a converter formed by DNA-disengaged RuvB subunits stimulates ATP hydrolysis and nucleotide exchange. Immobilization of the converter enables RuvB to convert the ATP-contained energy into a lever motion, pulling 2 nucleotides of DNA out of the RuvA tetramer per ATP hydrolyzed, thus driving DNA branch migration. The RuvB motors rotate together with the DNA substrate, which together with the progressing nucleotide cycle form the mechanistic basis for DNA recombination by continuous HJ branch migration. Branch migration allows RuvC to scan DNA until it finds its consensus sequence, where it cleaves and resolves cruciform DNA. The protein is Holliday junction branch migration complex subunit RuvB of Staphylococcus aureus (strain N315).